The sequence spans 600 residues: Transcription factor rlmA (600 aa).

In terms of domain architecture, MADS-box spans 1–61 (MGRRKIEIKA…KKLYEFSSCD (61 aa)). Disordered regions lie at residues 71–518 (YYGP…NIET) and 544–600 (GFGR…KSKT). Basic and acidic residues predominate over residues 75–89 (PHEHKGPEDFNGKRD). Residues 151 to 160 (PQPQGASRPS) show a composition bias toward polar residues. A compositionally biased stretch (pro residues) spans 222 to 242 (QPLPPHAIPPHPMPQPVPPHH). Positions 243–260 (QAPQHLPQHPHPLAQQTP) are enriched in low complexity. Residues 328–339 (HQRSLSSKSRSI) show a composition bias toward polar residues. The span at 364 to 384 (PRTESADVKAEAKQNDSKEIK) shows a compositional bias: basic and acidic residues. Over residues 386 to 397 (PAQPVAPPPPPR) the composition is skewed to pro residues. Residues 440–452 (RGSATADSSSSTG) are compositionally biased toward low complexity. A compositionally biased stretch (polar residues) spans 453-468 (NQTVTPAKANPDTNHS). Positions 490-501 (PPNPFARPPPPG) are enriched in pro residues. Positions 503–515 (ASQNSNAYNSNNN) are enriched in low complexity.

The protein belongs to the MEF2 family. Interacts with hsp90. In terms of processing, phosphorylation during asexual development.

The protein resides in the nucleus. In terms of biological role, transcription factor; part of cell wall integrity (CWI) signaling pathway composed of pkcA, the bck1-mkk2-mpka MAPK cascade and the downstream rlmA transcription regulator. The CWI signaling pathway regulates cell wall integrity and pyomelanin formation. CWI also controls oxidative stress response, gliotoxin production, iron adaptation and asexual development. Finally, CWI is constitutively required for A.fumigatus to cope with the temperature increase found in the mammalian lung environment, during infection. Positively regulates the phosphorylation of mpkA. Involved in tolerance to oxidative damage and transcriptional regulation of genes related to oxidative stress adaptation. Directly regulates the expression of regulators of conidiation, including flbB, flbC, brlA, abaA, and rasB, as well as genes involved in cell wall synthesis and remodeling. Specifically associates with the target fumiquinazoline (fmq) cluster genes promoters at conserved motifs (5'-TAWWWWTA-3') during conidiation to supplement mature conidia with fumiquinazoline C. Also controls the DHN-melanin production via binding the promoter of pksP. This is Transcription factor rlmA from Aspergillus fumigatus (strain ATCC MYA-4609 / CBS 101355 / FGSC A1100 / Af293) (Neosartorya fumigata).